Reading from the N-terminus, the 186-residue chain is Ribosome-recycling factor (186 aa).

This sequence belongs to the RRF family.

It localises to the cytoplasm. In terms of biological role, responsible for the release of ribosomes from messenger RNA at the termination of protein biosynthesis. May increase the efficiency of translation by recycling ribosomes from one round of translation to another. This Burkholderia mallei (strain NCTC 10247) protein is Ribosome-recycling factor.